Consider the following 1393-residue polypeptide: DNA-directed RNA polymerase subunit beta' (1393 aa).

C72, C74, C87, and C90 together coordinate Zn(2+). 3 residues coordinate Mg(2+): D463, D465, and D467. 4 residues coordinate Zn(2+): C812, C887, C894, and C897.

The protein belongs to the RNA polymerase beta' chain family. The RNAP catalytic core consists of 2 alpha, 1 beta, 1 beta' and 1 omega subunit. When a sigma factor is associated with the core the holoenzyme is formed, which can initiate transcription. Mg(2+) serves as cofactor. Zn(2+) is required as a cofactor.

The enzyme catalyses RNA(n) + a ribonucleoside 5'-triphosphate = RNA(n+1) + diphosphate. DNA-dependent RNA polymerase catalyzes the transcription of DNA into RNA using the four ribonucleoside triphosphates as substrates. In Chlamydia felis (strain Fe/C-56) (Chlamydophila felis), this protein is DNA-directed RNA polymerase subunit beta'.